We begin with the raw amino-acid sequence, 195 residues long: UPF0167 protein CbrC (195 aa).

The protein belongs to the UPF0167 family.

This chain is UPF0167 protein CbrC (cbrC), found in Escherichia coli (strain K12).